We begin with the raw amino-acid sequence, 130 residues long: Small ribosomal subunit protein uS11c (130 aa).

The protein belongs to the universal ribosomal protein uS11 family. In terms of assembly, part of the 30S ribosomal subunit.

The protein localises to the plastid. It is found in the chloroplast. In Chlorella vulgaris (Green alga), this protein is Small ribosomal subunit protein uS11c.